The chain runs to 266 residues: Basic endochitinase C (266 aa).

The N-terminal stretch at 1-23 is a signal peptide; sequence MRSLAVVVAVVATVAMAIGTAHG. 3 cysteine pairs are disulfide-bonded: Cys-46/Cys-108, Cys-120/Cys-128, and Cys-246/Cys-259. Glu-90 functions as the Proton donor in the catalytic mechanism.

The protein belongs to the glycosyl hydrolase 19 family. Chitinase class II subfamily. In terms of tissue distribution, localized to the starchy endoderm of the seed May localize to other parts of the seed including the aleurone cells (at protein level).

The catalysed reaction is Random endo-hydrolysis of N-acetyl-beta-D-glucosaminide (1-&gt;4)-beta-linkages in chitin and chitodextrins.. Defense against chitin-containing fungal pathogens. Binds the hyphal tips of fungi and degrades nascent chitin. The chain is Basic endochitinase C from Secale cereale (Rye).